Reading from the N-terminus, the 238-residue chain is Ribonuclease PH (238 aa).

Phosphate contacts are provided by residues Arg-86 and 124–126 (GTR).

The protein belongs to the RNase PH family. As to quaternary structure, homohexameric ring arranged as a trimer of dimers.

It carries out the reaction tRNA(n+1) + phosphate = tRNA(n) + a ribonucleoside 5'-diphosphate. Functionally, phosphorolytic 3'-5' exoribonuclease that plays an important role in tRNA 3'-end maturation. Removes nucleotide residues following the 3'-CCA terminus of tRNAs; can also add nucleotides to the ends of RNA molecules by using nucleoside diphosphates as substrates, but this may not be physiologically important. Probably plays a role in initiation of 16S rRNA degradation (leading to ribosome degradation) during starvation. The chain is Ribonuclease PH from Edwardsiella ictaluri (strain 93-146).